Consider the following 210-residue polypeptide: Dephospho-CoA kinase (210 aa).

The DPCK domain maps to 4–202; the sequence is WVGLTGGIGS…AFYSGIFASK (199 aa). 12 to 17 contacts ATP; that stretch reads GSGKSA.

This sequence belongs to the CoaE family.

It is found in the cytoplasm. The catalysed reaction is 3'-dephospho-CoA + ATP = ADP + CoA + H(+). Its pathway is cofactor biosynthesis; coenzyme A biosynthesis; CoA from (R)-pantothenate: step 5/5. Functionally, catalyzes the phosphorylation of the 3'-hydroxyl group of dephosphocoenzyme A to form coenzyme A. The sequence is that of Dephospho-CoA kinase from Neisseria gonorrhoeae (strain ATCC 700825 / FA 1090).